Here is a 358-residue protein sequence, read N- to C-terminus: Peroxidase 12 (358 aa).

The signal sequence occupies residues 1–31 (MTKAYSTRVLTFLILISLMAVTLNLFPTVEA). 4 cysteine pairs are disulfide-bonded: cysteine 53-cysteine 134, cysteine 86-cysteine 91, cysteine 140-cysteine 335, and cysteine 220-cysteine 247. Histidine 84 serves as the catalytic Proton acceptor. Ca(2+) contacts are provided by aspartate 85, valine 88, glycine 90, glutamate 92, and serine 94. Proline 183 is a substrate binding site. Residues asparagine 188 and asparagine 202 are each glycosylated (N-linked (GlcNAc...) asparagine). Residue histidine 213 participates in heme b binding. Ca(2+) is bound at residue threonine 214. A glycan (N-linked (GlcNAc...) asparagine) is linked at asparagine 251. Ca(2+)-binding residues include aspartate 259, serine 262, and aspartate 267. Asparagine 334 carries an N-linked (GlcNAc...) asparagine glycan.

It belongs to the peroxidase family. Classical plant (class III) peroxidase subfamily. Requires heme b as cofactor. It depends on Ca(2+) as a cofactor. In terms of tissue distribution, expressed in roots and leaves.

It localises to the secreted. It is found in the vacuole. The catalysed reaction is 2 a phenolic donor + H2O2 = 2 a phenolic radical donor + 2 H2O. Removal of H(2)O(2), oxidation of toxic reductants, biosynthesis and degradation of lignin, suberization, auxin catabolism, response to environmental stresses such as wounding, pathogen attack and oxidative stress. These functions might be dependent on each isozyme/isoform in each plant tissue. Its function is as follows. Exhibits a Ca(2+)-pectate binding affinity which could be interpreted in vivo as a specificity to interact with the pectic structure of the cell wall. The polypeptide is Peroxidase 12 (PER12) (Arabidopsis thaliana (Mouse-ear cress)).